Consider the following 613-residue polypeptide: V-type proton ATPase catalytic subunit A isoform 1 (613 aa).

Residue Gly-240–Thr-247 participates in ATP binding.

Belongs to the ATPase alpha/beta chains family. V-ATPase is a heteromultimeric enzyme composed of a peripheral catalytic V1 complex (main components: subunits A, B, C, D, E, and F) attached to an integral membrane V0 proton pore complex (main component: the proteolipid protein).

It carries out the reaction ATP + H2O + 4 H(+)(in) = ADP + phosphate + 5 H(+)(out). Its function is as follows. Catalytic subunit of the peripheral V1 complex of vacuolar ATPase. V-ATPase vacuolar ATPase is responsible for acidifying a variety of intracellular compartments in eukaryotic cells. In Acetabularia acetabulum (Mermaid's wine glass), this protein is V-type proton ATPase catalytic subunit A isoform 1.